Here is a 91-residue protein sequence, read N- to C-terminus: MSFFSMCVLGAAIGMAIGTLGTGIGQGLAVKSAVEGVSRNPGASGKIMTTMMIGLAMIESLAIYALVICLIILFANPYKDIALKLAETVAK.

2 helical membrane passes run 4-24 (FSMCVLGAAIGMAIGTLGTGI) and 53-73 (IGLAMIESLAIYALVICLIIL).

It belongs to the ATPase C chain family. In terms of assembly, F-type ATPases have 2 components, F(1) - the catalytic core - and F(0) - the membrane proton channel. F(1) has five subunits: alpha(3), beta(3), gamma(1), delta(1), epsilon(1). F(0) has three main subunits: a(1), b(2) and c(10-14). The alpha and beta chains form an alternating ring which encloses part of the gamma chain. F(1) is attached to F(0) by a central stalk formed by the gamma and epsilon chains, while a peripheral stalk is formed by the delta and b chains.

It localises to the cell inner membrane. Functionally, f(1)F(0) ATP synthase produces ATP from ADP in the presence of a proton or sodium gradient. F-type ATPases consist of two structural domains, F(1) containing the extramembraneous catalytic core and F(0) containing the membrane proton channel, linked together by a central stalk and a peripheral stalk. During catalysis, ATP synthesis in the catalytic domain of F(1) is coupled via a rotary mechanism of the central stalk subunits to proton translocation. Its function is as follows. Key component of the F(0) channel; it plays a direct role in translocation across the membrane. A homomeric c-ring of between 10-14 subunits forms the central stalk rotor element with the F(1) delta and epsilon subunits. The polypeptide is ATP synthase subunit c 2 (Pelobacter propionicus (strain DSM 2379 / NBRC 103807 / OttBd1)).